The sequence spans 791 residues: DUF1769 family protein duc1 (791 aa).

The disordered stretch occupies residues 158–189; it reads ADSQESDTESLPEINDSSDVSLSDLPSTNVTP. The segment covering 174–184 has biased composition (low complexity); that stretch reads SSDVSLSDLPS. The FFAT motif lies at 373 to 379; that stretch reads RYFTALE. Phosphotyrosine is present on Y374. A Phosphothreonine modification is found at T376. Disordered stretches follow at residues 381-505, 542-606, and 630-658; these read QQDQ…SNRR, NVAG…VDGK, and PKPV…NLDP. Over residues 415-426 the composition is skewed to basic residues; sequence LIKRMSLRSKKS. Positions 444 to 453 are enriched in low complexity; the sequence is STASAASTSA. Basic and acidic residues predominate over residues 455-473; it reads KTEKEKKMSAPRRSLDKLI. 2 positions are modified to phosphoserine: S477 and S493. The span at 477-487 shows a compositional bias: basic residues; that stretch reads SLHRHHHHHHK. A compositionally biased stretch (polar residues) spans 555–564; it reads EQTSITSGVP. S574 carries the post-translational modification Phosphoserine. Over residues 574–586 the composition is skewed to basic and acidic residues; sequence STPEKIVEERSID. Positions 587 to 601 are enriched in polar residues; the sequence is EVSQSNTPSSKQLPQ.

The protein belongs to the UPF0590 family. Interacts (via FFAT-motif) with scs2 (via MSP domain); the interaction is direct and serves to restrict the localization of duc1 to areas of cell membrane-endoplasmic reticulum contact sites, and away from the cell division site.

It is found in the cell membrane. Functionally, promotes the proper distribution of phosphatidylinositol 4,5-bisphosphate (PtdIns(4,5)P2/PIP2) synthesis at the cell membrane. May bind phosphatidylinositol 4,5-bisphosphate (PtdIns(4,5)P2/PIP2) and is required for robust anchoring of the contractile ring to the cell membrane. The polypeptide is DUF1769 family protein duc1 (Schizosaccharomyces pombe (strain 972 / ATCC 24843) (Fission yeast)).